A 331-amino-acid chain; its full sequence is Protein-methionine-sulfoxide reductase catalytic subunit MsrP (331 aa).

Positions Met1–Ala54 form a signal peptide, tat-type signal. Residues Asn86, Tyr89–Glu90, Cys144, Ser179, Asn227, Arg232, and Ser243–Lys245 contribute to the Mo-molybdopterin site.

Belongs to the MsrP family. In terms of assembly, heterodimer of a catalytic subunit (MsrP) and a heme-binding subunit (MsrQ). Mo-molybdopterin serves as cofactor. Predicted to be exported by the Tat system. The position of the signal peptide cleavage has not been experimentally proven.

The protein resides in the periplasm. The enzyme catalyses L-methionyl-[protein] + a quinone + H2O = L-methionyl-(S)-S-oxide-[protein] + a quinol. It carries out the reaction L-methionyl-[protein] + a quinone + H2O = L-methionyl-(R)-S-oxide-[protein] + a quinol. In terms of biological role, part of the MsrPQ system that repairs oxidized periplasmic proteins containing methionine sulfoxide residues (Met-O), using respiratory chain electrons. Thus protects these proteins from oxidative-stress damage caused by reactive species of oxygen and chlorine generated by the host defense mechanisms. MsrPQ is essential for the maintenance of envelope integrity under bleach stress, rescuing a wide series of structurally unrelated periplasmic proteins from methionine oxidation. The catalytic subunit MsrP is non-stereospecific, being able to reduce both (R-) and (S-) diastereoisomers of methionine sulfoxide. The sequence is that of Protein-methionine-sulfoxide reductase catalytic subunit MsrP from Ralstonia nicotianae (strain ATCC BAA-1114 / GMI1000) (Ralstonia solanacearum).